Here is a 308-residue protein sequence, read N- to C-terminus: Aspartate carbamoyltransferase catalytic subunit (308 aa).

Carbamoyl phosphate contacts are provided by Arg-49 and Thr-50. Lys-77 is a binding site for L-aspartate. Positions 99, 127, and 130 each coordinate carbamoyl phosphate. L-aspartate is bound by residues Arg-160 and Arg-211. 2 residues coordinate carbamoyl phosphate: Ala-252 and Pro-253.

The protein belongs to the aspartate/ornithine carbamoyltransferase superfamily. ATCase family. In terms of assembly, heterododecamer (2C3:3R2) of six catalytic PyrB chains organized as two trimers (C3), and six regulatory PyrI chains organized as three dimers (R2).

The enzyme catalyses carbamoyl phosphate + L-aspartate = N-carbamoyl-L-aspartate + phosphate + H(+). It participates in pyrimidine metabolism; UMP biosynthesis via de novo pathway; (S)-dihydroorotate from bicarbonate: step 2/3. Functionally, catalyzes the condensation of carbamoyl phosphate and aspartate to form carbamoyl aspartate and inorganic phosphate, the committed step in the de novo pyrimidine nucleotide biosynthesis pathway. In Bacillus caldolyticus, this protein is Aspartate carbamoyltransferase catalytic subunit.